The following is a 304-amino-acid chain: Recombination-associated protein RdgC (304 aa).

Belongs to the RdgC family.

Its subcellular location is the cytoplasm. The protein localises to the nucleoid. May be involved in recombination. This is Recombination-associated protein RdgC from Shewanella baltica (strain OS195).